The following is a 126-amino-acid chain: Small ribosomal subunit protein uS13c (126 aa).

The tract at residues 97 to 126 is disordered; the sequence is PLRGQRTRTNARTRRGGKKTVAGKKKAPRK. The segment covering 101-126 has biased composition (basic residues); it reads QRTRTNARTRRGGKKTVAGKKKAPRK.

The protein belongs to the universal ribosomal protein uS13 family. In terms of assembly, part of the 30S ribosomal subunit.

Its subcellular location is the plastid. The protein resides in the chloroplast. Functionally, located at the top of the head of the 30S subunit, it contacts several helices of the 16S rRNA. This is Small ribosomal subunit protein uS13c from Porphyra purpurea (Red seaweed).